Consider the following 755-residue polypeptide: Oligopeptide transporter 1 (755 aa).

13 helical membrane-spanning segments follow: residues T58–F78, Q82–A102, I134–V154, A165–F185, F226–P246, F298–I318, Y370–I390, W434–F454, W462–I482, F546–W566, G614–W634, A664–F684, and I697–F717.

Belongs to the oligopeptide OPT transporter (TC 2.A.67.1) family. Highly expressed in flowers, and moderately expressed in leaves and stems.

It is found in the membrane. Its function is as follows. Involved in the translocation of tetra- and pentapeptides across the cellular membrane in an energy-dependent manner. This chain is Oligopeptide transporter 1 (OPT1), found in Arabidopsis thaliana (Mouse-ear cress).